A 1148-amino-acid chain; its full sequence is Alpha-mannosidase 2 (1148 aa).

Residues 1-5 (MKLSR) lie on the Cytoplasmic side of the membrane. Residues 6–26 (QFTVFGSAIFCVVIFSLYLML) form a helical; Signal-anchor for type II membrane protein membrane-spanning segment. Residues 27 to 1148 (DRGHLDYPRG…EISTSRIRLR (1122 aa)) lie on the Lumenal side of the membrane. Serine 80 and serine 82 each carry phosphoserine. Residue asparagine 93 is glycosylated (N-linked (GlcNAc...) asparagine). 4 residues coordinate Zn(2+): histidine 174, aspartate 176, aspartate 288, and histidine 568. Aspartate 288 acts as the Nucleophile in catalysis. Residues 1121–1148 (MHSPPDAQNTSEVSLSPMEISTSRIRLR) form a disordered region.

Belongs to the glycosyl hydrolase 38 family. Homodimer; disulfide-linked. The cofactor is Zn(2+). In terms of processing, glycosylated. Liver.

The protein localises to the golgi apparatus membrane. The catalysed reaction is N(4)-{beta-D-GlcNAc-(1-&gt;2)-alpha-D-Man-(1-&gt;3)-[alpha-D-Man-(1-&gt;3)-[alpha-D-Man-(1-&gt;6)]-alpha-D-Man-(1-&gt;6)]-beta-D-Man-(1-&gt;4)-beta-D-GlcNAc-(1-&gt;4)-beta-D-GlcNAc}-L-asparaginyl-[protein] + 2 H2O = 2 alpha-D-mannopyranose + an N(4)-{beta-D-GlcNAc-(1-&gt;2)-alpha-D-Man-(1-&gt;3)-[alpha-D-Man-(1-&gt;6)]-beta-D-Man-(1-&gt;4)-beta-D-GlcNAc-(1-&gt;4)-beta-D-GlcNAc}-L-asparaginyl-[protein]. It functions in the pathway protein modification; protein glycosylation. Inhibited by swainsonine. In terms of biological role, catalyzes the first committed step in the biosynthesis of complex N-glycans. It controls conversion of high mannose to complex N-glycans; the final hydrolytic step in the N-glycan maturation pathway. The chain is Alpha-mannosidase 2 (Man2a1) from Rattus norvegicus (Rat).